The following is an 813-amino-acid chain: Polycomb group protein FERTILIZATION-INDEPENDENT SEED 2 (813 aa).

Positions methionine 1–aspartate 27 are disordered. The segment covering serine 15–aspartate 26 has biased composition (acidic residues). The C2H2-type zinc finger occupies cysteine 134–histidine 155. 3 disordered regions span residues serine 197–asparagine 216, aspartate 232–isoleucine 261, and glutamate 274–leucine 648. A compositionally biased stretch (basic and acidic residues) spans aspartate 232–aspartate 246. An A-1 repeat occupies histidine 243–isoleucine 264. The segment at histidine 243 to arginine 542 is 12 X approximate repeat A. A B-1 repeat occupies leucine 265–proline 281. A 7 X approximate repeat B region spans residues leucine 265–threonine 640. An A-2 repeat occupies histidine 282–threonine 304. Basic and acidic residues-rich tracts occupy residues serine 296 to asparagine 307, histidine 319 to glutamate 331, and lysine 344 to aspartate 353. An A-3 repeat occupies histidine 305 to threonine 327. The A-4 repeat unit spans residues histidine 328 to threonine 349. An A-5 repeat occupies histidine 350–isoleucine 371. Residues leucine 372–arginine 388 form a B-2 repeat. Positions arginine 388–lysine 402 are enriched in basic residues. Residues alanine 403–leucine 419 form a B-3 repeat. Composition is skewed to basic and acidic residues over residues serine 414–aspartate 423 and serine 453–aspartate 462. The A-6 repeat unit spans residues histidine 420 to isoleucine 441. The B-4 repeat unit spans residues leucine 442–proline 458. Residues histidine 459–arginine 481 form an A-7 repeat. Positions histidine 472 to arginine 481 are enriched in basic residues. The A-8 repeat unit spans residues lysine 482–isoleucine 502. Polar residues predominate over residues aspartate 501–glutamate 512. The stretch at leucine 503–arginine 519 is one B-5 repeat. The span at serine 514 to aspartate 523 shows a compositional bias: basic and acidic residues. The stretch at histidine 520–arginine 542 is one A-9 repeat. The stretch at lysine 543–isoleucine 563 is one A-10 repeat. A B-6 repeat occupies leucine 564 to proline 579. Residues serine 574–valine 586 are compositionally biased toward basic and acidic residues. One copy of the A-11 repeat lies at histidine 580–threonine 601. The span at histidine 593–histidine 602 shows a compositional bias: basic residues. One copy of the A-12 repeat lies at histidine 602 to isoleucine 623. Residues leucine 624–threonine 640 form a B-7 repeat. Residues leucine 648–threonine 783 form a VEFS-box region.

This sequence belongs to the VEFS (VRN2-EMF2-FIS2-SU(Z)12) family. In terms of assembly, probably indirectly associated with FIE and/or MEA. In plants, PcG complexes are probably composed of a member of the EZ family (CLF or MEA), FIE, and a member of the VEFS family (FIS2, VRN2 or EMF2). As to expression, weakly expressed. Expressed in late siliques.

It is found in the nucleus. Polycomb group (PcG) protein. PcG proteins act by forming multiprotein complexes, which are required to maintain the transcriptionally repressive state of homeotic genes throughout development. PcG proteins are not required to initiate repression, but to maintain it during later stages of development. They probably act via the methylation of histones, rendering chromatin heritably changed in its expressibility. Required to prevent the proliferation of the central cell by repressing unknown target genes before fertilization. Regulates the anteroposterior organization of the endosperm. In Arabidopsis thaliana (Mouse-ear cress), this protein is Polycomb group protein FERTILIZATION-INDEPENDENT SEED 2.